Consider the following 542-residue polypeptide: MFS-type efflux pump MMF1 (542 aa).

Transmembrane regions (helical) follow at residues 24–44 (WTIF…MTMI), 51–71 (IVAA…AFLL), 98–118 (VIFL…VLVV), 124–144 (GLGG…LTTL), 151–171 (FGLI…LGGV), 179–199 (WIFW…VLFL), 215–235 (LDLV…IAVT), and 248–268 (VWVP…VEWI). Asn285 carries an N-linked (GlcNAc...) asparagine glycan. The next 6 helical transmembrane spans lie at 296–316 (FLHG…FQAI), 326–346 (IWSF…GLLI), 355–375 (LIFI…HWSV), 384–404 (ISQI…LPPI), 419–439 (AYAF…TTIF), and 490–510 (ISDS…STFL).

Belongs to the major facilitator superfamily.

It is found in the cell membrane. Functionally, glycosyltransferase; part of the gene cluster that mediates the biosynthesis of mannosylerythritol lipids (MELs), surface-active substances that enhance the availability of water-insoluble substrates. MMF1 is directly involved in the secretiopn of MALs. The protein is MFS-type efflux pump MMF1 of Pseudozyma antarctica (strain T-34) (Yeast).